A 360-amino-acid chain; its full sequence is Mannitol-1-phosphate 5-dehydrogenase (360 aa).

6–17 (ALHFGAGNIGRG) contributes to the NAD(+) binding site.

It belongs to the mannitol dehydrogenase family.

The catalysed reaction is D-mannitol 1-phosphate + NAD(+) = beta-D-fructose 6-phosphate + NADH + H(+). The chain is Mannitol-1-phosphate 5-dehydrogenase from Mycoplasmopsis pulmonis (strain UAB CTIP) (Mycoplasma pulmonis).